The sequence spans 154 residues: Ascorbate-specific PTS system EIIA component (154 aa).

Positions S6–T150 constitute a PTS EIIA type-2 domain. The Tele-phosphohistidine intermediate role is filled by H68. At H68 the chain carries Phosphohistidine.

Its subcellular location is the cytoplasm. In terms of biological role, the phosphoenolpyruvate-dependent sugar phosphotransferase system (sugar PTS), a major carbohydrate active transport system, catalyzes the phosphorylation of incoming sugar substrates concomitantly with their translocation across the cell membrane. The enzyme II UlaABC PTS system is involved in ascorbate transport. The polypeptide is Ascorbate-specific PTS system EIIA component (ulaC) (Escherichia coli O157:H7).